The following is a 320-amino-acid chain: Tetraacyldisaccharide 4'-kinase (320 aa).

Position 53–60 (53–60) interacts with ATP; it reads SVGGNGKT.

Belongs to the LpxK family.

The catalysed reaction is a lipid A disaccharide + ATP = a lipid IVA + ADP + H(+). Its pathway is glycolipid biosynthesis; lipid IV(A) biosynthesis; lipid IV(A) from (3R)-3-hydroxytetradecanoyl-[acyl-carrier-protein] and UDP-N-acetyl-alpha-D-glucosamine: step 6/6. In terms of biological role, transfers the gamma-phosphate of ATP to the 4'-position of a tetraacyldisaccharide 1-phosphate intermediate (termed DS-1-P) to form tetraacyldisaccharide 1,4'-bis-phosphate (lipid IVA). This is Tetraacyldisaccharide 4'-kinase from Psychromonas ingrahamii (strain DSM 17664 / CCUG 51855 / 37).